The following is a 321-amino-acid chain: MRALAALSAPPNERLLPRDPAATRDPDAARPARRSAVERLAADRAKYVRGRPGTGRGVASEGSGPGAIKCPGNDPGPPARAPAPVARRAIARKPLRPDSLIIYRQKCEFVRGSGADGPRASLVKKLFQGPGKDKAPVPRTGDEGKAGNPETVPTTPGPAADPAIPETPAPAARSAAPSSVPAAPPGPEPRVVRRRGLQRSQSDLSSRYSAALAESDTFFQYCGLDPEVVEALGRENFTAGSDCVTLKVRSVSVATSGSGFSRHSGGDDEGLQEEELIEQVPSTTSVIERNARIIKWLYTCKKAKETPSQEQSRTRGSKPSR.

Disordered regions lie at residues 1–84 (MRAL…APAP) and 111–203 (RGSG…SQSD). 2 stretches are compositionally biased toward basic and acidic residues: residues 15-46 (LLPR…DRAK) and 131-145 (GKDK…DEGK). A compositionally biased stretch (low complexity) spans 169–181 (APAARSAAPSSVP). Position 241 is a phosphoserine (serine 241).

It belongs to the FAM110 family. Interacts with AKT1; the interaction is transient and follows AKT1 activation. Interacts with PPP2CA and alpha-tubulin. As to expression, detected in stomach, thyroid, trachea, adrenal gland and testis, and at low levels in prostate, ovary, intestine, colon, spinal cord and lymph node.

It is found in the cytoplasm. The protein localises to the cytoskeleton. It localises to the microtubule organizing center. Its subcellular location is the centrosome. The protein resides in the spindle pole. It is found in the nucleus. Its function is as follows. May play a role in microtubule organization. May play a role in cell spreading and cell migration of epithelial cells; the function may involve the AKT1 signaling pathway. This chain is Protein FAM110C (FAM110C), found in Homo sapiens (Human).